Reading from the N-terminus, the 356-residue chain is Putative methylthioribose-1-phosphate isomerase (356 aa).

Substrate-binding positions include 57–59 (RGA), Arg100, and Gln206. The active-site Proton donor is Asp247. 257–258 (NK) lines the substrate pocket.

Belongs to the eIF-2B alpha/beta/delta subunits family. MtnA subfamily.

The catalysed reaction is 5-(methylsulfanyl)-alpha-D-ribose 1-phosphate = 5-(methylsulfanyl)-D-ribulose 1-phosphate. In terms of biological role, catalyzes the interconversion of methylthioribose-1-phosphate (MTR-1-P) into methylthioribulose-1-phosphate (MTRu-1-P). In Pyrococcus abyssi (strain GE5 / Orsay), this protein is Putative methylthioribose-1-phosphate isomerase (aIF-2BI).